The following is a 604-amino-acid chain: M-phase inducer phosphatase cdc-25.1 (604 aa).

Disordered stretches follow at residues 33–67 and 127–188; these read PKTL…DVDF and EKRV…PFGD. The span at 44–54 shows a compositional bias: polar residues; sequence RDSGVSMTSCS. Residues 127–138 show a composition bias toward basic and acidic residues; the sequence is EKRVMSERPTDN. Residues 305-413 enclose the Rhodanese domain; sequence FDKKYIIVDC…LWSTAECRQI (109 aa). Disordered regions lie at residues 443–464 and 562–588; these read ASLK…CTRS and DFPD…GGHQ.

Belongs to the MPI phosphatase family.

It carries out the reaction O-phospho-L-tyrosyl-[protein] + H2O = L-tyrosyl-[protein] + phosphate. The polypeptide is M-phase inducer phosphatase cdc-25.1 (cdc-25.1) (Caenorhabditis elegans).